Consider the following 442-residue polypeptide: tRNA modification GTPase MnmE (442 aa).

Residues R24, E82, and K120 each coordinate (6S)-5-formyl-5,6,7,8-tetrahydrofolate. The TrmE-type G domain maps to 217–367; that stretch reads GLHIVITGEP…LVSVIKEKVE (151 aa). Residues 227 to 232, 246 to 252, and 271 to 274 contribute to the GTP site; these read NVGKST, SEYVGTT, and DTAG. Residues S231 and T252 each contribute to the Mg(2+) site. K442 provides a ligand contact to (6S)-5-formyl-5,6,7,8-tetrahydrofolate.

It belongs to the TRAFAC class TrmE-Era-EngA-EngB-Septin-like GTPase superfamily. TrmE GTPase family. As to quaternary structure, homodimer. Heterotetramer of two MnmE and two MnmG subunits. K(+) is required as a cofactor.

It is found in the cytoplasm. Its function is as follows. Exhibits a very high intrinsic GTPase hydrolysis rate. Involved in the addition of a carboxymethylaminomethyl (cmnm) group at the wobble position (U34) of certain tRNAs, forming tRNA-cmnm(5)s(2)U34. The sequence is that of tRNA modification GTPase MnmE from Wolbachia sp. subsp. Brugia malayi (strain TRS).